Here is a 211-residue protein sequence, read N- to C-terminus: Degradation in the endoplasmic reticulum protein 1 (211 aa).

The residue at position 1 (Met1) is an N-acetylmethionine. At 1 to 14 the chain is on the cytoplasmic side; it reads MDAVILNLLGDIPL. Residues 15–32 traverse the membrane as a helical segment; the sequence is VTRLWTIGCLVLSGLTSL. The Lumenal portion of the chain corresponds to 33 to 67; the sequence is RIVDPGKVVYSYDLVFKKGQYGRLLYSIFDYGAFN. Residues 68 to 85 form a helical membrane-spanning segment; it reads WISMINIFVSANHLSTLE. Residues 86 to 92 lie on the Cytoplasmic side of the membrane; the sequence is NSFNLRR. The helical transmembrane segment at 93 to 109 threads the bilayer; it reads KFCWIIFLLLVILVKMT. The Lumenal segment spans residues 110–117; that stretch reads SIEQPAAS. A helical transmembrane segment spans residues 118 to 133; it reads LGVLLHENLVYYELKK. The Cytoplasmic segment spans residues 134–149; the sequence is NGNQMNVRFFGAIDVS. Residues 150-165 form a helical membrane-spanning segment; it reads PSIFPIYMNAVMYFVY. The Lumenal portion of the chain corresponds to 166-168; it reads KRS. Residues 169–189 traverse the membrane as a helical segment; sequence WLEIAMNFMPGHVIYYMDDII. Topologically, residues 190–211 are cytoplasmic; it reads GKIYGIDLCKSPYDWFRNTETP.

It belongs to the derlin family. In terms of assembly, component of the HRD1 ubiquitin ligase complex which contains the E3 ligase HRD1, its cofactors HRD3, USA1 and DER1, substrate recruiting factor YOS9 and CDC48-binding protein UBX2. Within the complex, interacts with USA1 (via C-terminus). In ERAD-L, HRD3 and YOS9 jointly bind misfolded glycoproteins in the endoplasmic reticulum (ER) lumen. Movement of ERAD-L substrates through the ER membrane is facilitated by HRD1 and DER1 which have lateral gates facing each other and which distort the membrane region between the lateral gates, making it much thinner than a normal phospholipid bilayer. Substrates insert into the membrane as a hairpin loop with one strand interacting with DER1 and the other with HRD1. The HRD1 complex interacts with the heterotrimeric CDC48-NPL4-UFD1 ATPase complex which is recruited by UBX2 via its interaction with CDC48 and which moves ubiquitinated substrates to the cytosol for targeting to the proteasome. Post-translationally, N-terminally acetylated by acetyltransferase NatB which enhances DER1 stability and is required for ERAD-L function.

It is found in the endoplasmic reticulum membrane. Component of the endoplasmic reticulum-associated degradation (ERAD) pathway. Specifically required for the ERAD-L pathway which mediates the degradation of proteins with misfolded lumenal domains within the endoplasmic reticulum (ER). Facilitates retrotranslocation of misfolded proteins from the ER lumen through the ER membrane in conjunction with HRD1. Both proteins have lateral gates facing each other and distort the membrane region between the lateral gates, making it much thinner than a normal phospholipid bilayer. Substrates insert into the membrane as a hairpin loop with one strand interacting with DER1 and the other with HRD1. This chain is Degradation in the endoplasmic reticulum protein 1 (DER1), found in Saccharomyces cerevisiae (strain ATCC 204508 / S288c) (Baker's yeast).